We begin with the raw amino-acid sequence, 67 residues long: Small ribosomal subunit protein eS17 (67 aa).

This sequence belongs to the eukaryotic ribosomal protein eS17 family.

The polypeptide is Small ribosomal subunit protein eS17 (Thermococcus onnurineus (strain NA1)).